The chain runs to 1304 residues: Histone-lysine N-methyltransferase met-2 (1304 aa).

Residues 1 to 16 (MDQQEPSNNVDTSSIL) are compositionally biased toward polar residues. The segment at 1–31 (MDQQEPSNNVDTSSILSDDGMETQEQSSFVT) is disordered. Positions 97–129 (NESEQEAVAAQRRVDAEKTAKDEAELKQQEEAE) form a coiled coil. The 76-residue stretch at 834–909 (FHRNSPIHTP…FSFDARIDTA (76 aa)) folds into the MBD domain. The Pre-SET domain maps to 971 to 1049 (SGCSCDGDCS…SCYNRVVQNN (79 aa)). Residues Cys-973, Cys-975, Cys-979, Cys-985, Cys-987, Cys-1030, Cys-1034, Cys-1036, and Cys-1041 each coordinate Zn(2+). Residues 1052–1277 (YPMHIFKTAQ…AGDELTWDYQ (226 aa)) enclose the SET domain. Residues 1062 to 1064 (SGW), Asp-1098, and Tyr-1100 each bind S-adenosyl-L-methionine. The span at 1113–1122 (EKGREDHETD) shows a compositional bias: basic and acidic residues. The disordered stretch occupies residues 1113-1201 (EKGREDHETD…DSMEKDNIES (89 aa)). The span at 1128-1144 (DESDYDDEEGSDGDSGD) shows a compositional bias: acidic residues. The segment covering 1152-1165 (KRQDSSESGEETKR) has biased composition (basic and acidic residues). A compositionally biased stretch (basic residues) spans 1166-1178 (LTRQKRKQSKKSG). The span at 1182–1201 (SVEKDDTTPRDSMEKDNIES) shows a compositional bias: basic and acidic residues. S-adenosyl-L-methionine-binding positions include Arg-1231 and 1234-1235 (NH). Residues Cys-1237, Cys-1290, Cys-1292, and Cys-1297 each coordinate Zn(2+). Residues 1286 to 1302 (TQLTCHCGAENCTGRLL) form the Post-SET domain.

The protein belongs to the class V-like SAM-binding methyltransferase superfamily.

It is found in the nucleus. It localises to the chromosome. Its subcellular location is the cytoplasm. The catalysed reaction is N(6)-methyl-L-lysyl(9)-[histone H3] + S-adenosyl-L-methionine = N(6),N(6)-dimethyl-L-lysyl(9)-[histone H3] + S-adenosyl-L-homocysteine + H(+). It catalyses the reaction L-lysyl(9)-[histone H3] + S-adenosyl-L-methionine = N(6)-methyl-L-lysyl(9)-[histone H3] + S-adenosyl-L-homocysteine + H(+). Histone methyltransferase which is required for the mono- and dimethylation of 'Lys-9' of histone H3. This increases the efficiency of set-25-mediated trimethylation of histone H3 'Lys-9'. Involved in the transcriptional repression of lin-3 which is required for the negative regulation of vulval cell fate specification during postembryonic development. Has a role in blocking checkpoint signaling and mediating the transcriptional silencing of meiotic sex chromosome inactivation; a mechanism which enables checkpoint proteins to distinguish between the partnerless male X chromosome and asynapsed chromosomes thereby shielding the lone X from inappropriate activation of an apoptotic program. Operates redundantly with set-25 to position chromatin at the nuclear periphery. Required for small-RNA-induced H3K9 methylation. Together with set-25, protects and stabilizes repeat-rich genomic regions by suppressing transcription-induced replication stress through methylation of H3K9. Together with spr-5, required for transgenerational fertility. The protein is Histone-lysine N-methyltransferase met-2 (met-2) of Caenorhabditis elegans.